The sequence spans 85 residues: Small ribosomal subunit protein uS15c (85 aa).

Belongs to the universal ribosomal protein uS15 family. As to quaternary structure, part of the 30S ribosomal subunit.

The protein localises to the plastid. It is found in the chloroplast. In Chaetosphaeridium globosum (Charophycean green alga), this protein is Small ribosomal subunit protein uS15c (rps15).